The sequence spans 223 residues: Large ribosomal subunit protein bL25 (223 aa).

The interval 198–223 (EEIGDRPRSAEEGAAPVKERKLRESE) is disordered.

The protein belongs to the bacterial ribosomal protein bL25 family. CTC subfamily. In terms of assembly, part of the 50S ribosomal subunit; part of the 5S rRNA/L5/L18/L25 subcomplex. Contacts the 5S rRNA. Binds to the 5S rRNA independently of L5 and L18.

Its function is as follows. This is one of the proteins that binds to the 5S RNA in the ribosome where it forms part of the central protuberance. The polypeptide is Large ribosomal subunit protein bL25 (Thermomicrobium roseum (strain ATCC 27502 / DSM 5159 / P-2)).